The following is an 85-amino-acid chain: ATP synthase subunit c (85 aa).

2 helical membrane-spanning segments follow: residues 10 to 30 (IAVA…FAVL) and 53 to 73 (FIIA…ALLF).

It belongs to the ATPase C chain family. As to quaternary structure, F-type ATPases have 2 components, F(1) - the catalytic core - and F(0) - the membrane proton channel. F(1) has five subunits: alpha(3), beta(3), gamma(1), delta(1), epsilon(1). F(0) has three main subunits: a(1), b(2) and c(10-14). The alpha and beta chains form an alternating ring which encloses part of the gamma chain. F(1) is attached to F(0) by a central stalk formed by the gamma and epsilon chains, while a peripheral stalk is formed by the delta and b chains.

The protein resides in the cell inner membrane. Its function is as follows. F(1)F(0) ATP synthase produces ATP from ADP in the presence of a proton or sodium gradient. F-type ATPases consist of two structural domains, F(1) containing the extramembraneous catalytic core and F(0) containing the membrane proton channel, linked together by a central stalk and a peripheral stalk. During catalysis, ATP synthesis in the catalytic domain of F(1) is coupled via a rotary mechanism of the central stalk subunits to proton translocation. Functionally, key component of the F(0) channel; it plays a direct role in translocation across the membrane. A homomeric c-ring of between 10-14 subunits forms the central stalk rotor element with the F(1) delta and epsilon subunits. The sequence is that of ATP synthase subunit c from Vibrio vulnificus (strain CMCP6).